Consider the following 288-residue polypeptide: Acetyl-coenzyme A carboxylase carboxyl transferase subunit beta (288 aa).

The region spanning 34 to 288 is the CoA carboxyltransferase N-terminal domain; the sequence is LFAKCPACKH…HLVSFHGGGQ (255 aa). Residues C38, C41, C56, and C59 each coordinate Zn(2+). A C4-type zinc finger spans residues 38-59; it reads CPACKHMIYKKDLGLAKICPTC.

Belongs to the AccD/PCCB family. As to quaternary structure, acetyl-CoA carboxylase is a heterohexamer composed of biotin carboxyl carrier protein (AccB), biotin carboxylase (AccC) and two subunits each of ACCase subunit alpha (AccA) and ACCase subunit beta (AccD). Zn(2+) serves as cofactor.

The protein localises to the cytoplasm. The catalysed reaction is N(6)-carboxybiotinyl-L-lysyl-[protein] + acetyl-CoA = N(6)-biotinyl-L-lysyl-[protein] + malonyl-CoA. It participates in lipid metabolism; malonyl-CoA biosynthesis; malonyl-CoA from acetyl-CoA: step 1/1. Component of the acetyl coenzyme A carboxylase (ACC) complex. Biotin carboxylase (BC) catalyzes the carboxylation of biotin on its carrier protein (BCCP) and then the CO(2) group is transferred by the transcarboxylase to acetyl-CoA to form malonyl-CoA. The polypeptide is Acetyl-coenzyme A carboxylase carboxyl transferase subunit beta (Streptococcus pyogenes serotype M49 (strain NZ131)).